An 84-amino-acid chain; its full sequence is MAFGAGGGGGGRRPFFRRRKSCPFSGENAPKIDYKDVKLLSRYVSERGKIVPSRITAVSAKKQRELAQAIKRSRFLGLLPYVIK.

The protein belongs to the bacterial ribosomal protein bS18 family. Part of the 30S ribosomal subunit. Forms a tight heterodimer with protein bS6.

Its function is as follows. Binds as a heterodimer with protein bS6 to the central domain of the 16S rRNA, where it helps stabilize the platform of the 30S subunit. This is Small ribosomal subunit protein bS18 from Methylorubrum extorquens (strain CM4 / NCIMB 13688) (Methylobacterium extorquens).